The sequence spans 377 residues: Nitric oxide reductase FlRd-NAD(+) reductase (377 aa).

Belongs to the FAD-dependent oxidoreductase family. FAD serves as cofactor.

Its subcellular location is the cytoplasm. It carries out the reaction 2 reduced [nitric oxide reductase rubredoxin domain] + NAD(+) + H(+) = 2 oxidized [nitric oxide reductase rubredoxin domain] + NADH. The protein operates within nitrogen metabolism; nitric oxide reduction. One of at least two accessory proteins for anaerobic nitric oxide (NO) reductase. Reduces the rubredoxin moiety of NO reductase. The protein is Nitric oxide reductase FlRd-NAD(+) reductase of Klebsiella pneumoniae (strain 342).